The following is a 432-amino-acid chain: N-acylneuraminate cytidylyltransferase (432 aa).

N-acetylmethionine is present on methionine 1. Residues 1–38 (MDALEKGAVTSGPAPRGRPSRGRPPKLQRSRGAGRGLE) form a disordered region. Residues 15–31 (PRGRPSRGRPPKLQRSR) carry the BC1 motif motif. Residues 18–29 (RPSRGRPPKLQR) are compositionally biased toward basic residues. Arginine 35 and arginine 50 each carry omega-N-methylarginine. Substrate is bound by residues arginine 50, asparagine 60, arginine 109, serine 118, serine 120, and glutamine 141. A BC2 motif motif is present at residues 198–204 (KRPRRQD). The active site involves arginine 199. Positions 267–274 (KEKLKEIK) match the BC3 motif motif.

This sequence belongs to the CMP-NeuNAc synthase family. In terms of assembly, homotetramer; the active enzyme is formed by a dimer of dimers. In terms of tissue distribution, highly expressed in brain and heart, and at intermediate level muscle and liver.

Its subcellular location is the nucleus. It catalyses the reaction an N-acylneuraminate + CTP = a CMP-N-acyl-beta-neuraminate + diphosphate. It functions in the pathway amino-sugar metabolism; N-acetylneuraminate metabolism. Functionally, catalyzes the activation of N-acetylneuraminic acid (NeuNAc) to cytidine 5'-monophosphate N-acetylneuraminic acid (CMP-NeuNAc), a substrate required for the addition of sialic acid. Has some activity toward NeuNAc, N-glycolylneuraminic acid (Neu5Gc) or 2-keto-3-deoxy-D-glycero-D-galacto-nononic acid (KDN). The polypeptide is N-acylneuraminate cytidylyltransferase (Cmas) (Mus musculus (Mouse)).